The following is a 309-amino-acid chain: Protein FdhE homolog (309 aa).

This sequence belongs to the FdhE family.

It is found in the cytoplasm. Functionally, necessary for formate dehydrogenase activity. This chain is Protein FdhE homolog, found in Klebsiella pneumoniae (strain 342).